We begin with the raw amino-acid sequence, 66 residues long: Large ribosomal subunit protein bL33 (66 aa).

Belongs to the bacterial ribosomal protein bL33 family.

The sequence is that of Large ribosomal subunit protein bL33 from Wolbachia pipientis subsp. Culex pipiens (strain wPip).